A 250-amino-acid chain; its full sequence is UPF0259 membrane protein Spro_2675 (250 aa).

Helical transmembrane passes span 23–43, 87–107, 132–152, 156–176, 192–212, and 222–242; these read ILML…AFSP, AATF…LTLI, LLLL…LFVV, IMAI…KGVF, VIVP…FMVS, and ASVV…IYLF.

Belongs to the UPF0259 family.

It localises to the cell inner membrane. The polypeptide is UPF0259 membrane protein Spro_2675 (Serratia proteamaculans (strain 568)).